Consider the following 877-residue polypeptide: Transcriptional corepressor SEUSS (877 aa).

Disordered regions lie at residues 1 to 42 and 272 to 295; these read MVPS…VSPR and LKSM…PLRP. Over residues 272–292 the composition is skewed to low complexity; sequence LKSMPQQRPQLPQQFQQQNLP. Positions 321–563 are dimerization; sequence PEDNNIEFWR…ETRTGPIESL (243 aa). The short motif at 330–344 is the Nuclear localization signal element; the sequence is RKFVAEYFAPNAKKR. Disordered regions lie at residues 560–599, 612–633, and 666–753; these read IESL…QQQQ, QQTV…LMQG, and GRHQ…NESS. The stretch at 582 to 618 forms a coiled coil; sequence QQASDQLRQQQQQQQQQQQQQQQQQQQQQQQQTVSQN. The span at 590–599 shows a compositional bias: low complexity; the sequence is QQQQQQQQQQ. Residues 614 to 633 show a composition bias toward polar residues; sequence TVSQNTNSDQSSRQVALMQG. Low complexity-rich tracts occupy residues 688–703 and 711–725; these read QSPS…SSQQ and QSPT…PSQN. Polar residues predominate over residues 726–741; that stretch reads GIPSVNHMGSTNSPAM.

This sequence belongs to the adn1/SEU family. Forms a corepressor complex with LUG; LUG is the transcription repressor subunit and SEU the specific DNA-binding adapter. Interacts with AGL24-AP1 and SVP-AP1 dimers when complexed to SEU. Interacts with AP1/AGL7 and SEP3/AGL9. Binds to LUH. As to expression, expressed in root, leaves, seedlings, vegetative and reproductive shoot apical meristems, seeds, floral meristems and all floral organs.

The protein resides in the nucleus. The protein localises to the nucleoplasm. Its function is as follows. DNA-binding adapter subunit of the SEU-LUG transcriptional corepressor of the C class floral homeotic gene AGAMOUS during the early stages of floral meristem development. Is part of the A class cadastral complex that define the boundaries between the A and C class homeotic genes expression and function. Interacts together with APETALA2 and LEUNIG to repress AGAMOUS expression. In association with LUG, regulates petal shape through AGAMOUS-independent mechanisms. Controls cell division during petal development and enable the proper patterning of petal blade vasculature. Required for the proper elaboration of petal polarity along the adaxial/abaxial axis. May act through direct or indirect regulation of PHABULOSA and YAB1 and thus regulate cellular proliferation within the developing petal blade. In association with AINTEGUMENTA (ANT), coordinates patterning cues and cellular proliferation along the three positional axes of the developing gynoecium. Required for the development of the medial ridge and subsequent ovule initiation. This chain is Transcriptional corepressor SEUSS (SEU), found in Arabidopsis thaliana (Mouse-ear cress).